Here is a 532-residue protein sequence, read N- to C-terminus: FRIGIDA-like protein 4b (532 aa).

Belongs to the Frigida family. Expressed in leaves, shoot apex, flowers and during seed development.

The sequence is that of FRIGIDA-like protein 4b (FRL4B) from Arabidopsis thaliana (Mouse-ear cress).